Here is a 183-residue protein sequence, read N- to C-terminus: Ubiquitin-conjugating enzyme E2-21 kDa (183 aa).

The 163-residue stretch at 17 to 179 folds into the UBC core domain; it reads TCMSRIVKEY…VKYFLAERER (163 aa). Cys-115 serves as the catalytic Glycyl thioester intermediate.

It belongs to the ubiquitin-conjugating enzyme family.

The protein localises to the peroxisome. The enzyme catalyses S-ubiquitinyl-[E1 ubiquitin-activating enzyme]-L-cysteine + [E2 ubiquitin-conjugating enzyme]-L-cysteine = [E1 ubiquitin-activating enzyme]-L-cysteine + S-ubiquitinyl-[E2 ubiquitin-conjugating enzyme]-L-cysteine.. It participates in protein modification; protein ubiquitination. Functionally, catalyzes the covalent attachment of ubiquitin to other proteins. Essential for peroxisome biogenesis. Required for UBC4-independent ubiquitination of PEX5. The chain is Ubiquitin-conjugating enzyme E2-21 kDa (PEX4) from Saccharomyces cerevisiae (strain ATCC 204508 / S288c) (Baker's yeast).